Reading from the N-terminus, the 1601-residue chain is Polycomb group protein Psc (1601 aa).

Disordered regions lie at residues 1 to 91 (MMTP…TTTT) and 165 to 245 (NGIK…DLAT). 2 stretches are compositionally biased toward low complexity: residues 8–91 (AIQP…TTTT) and 182–198 (SSSS…SSSS). Residues 199–215 (WPTTRRATSEDASSNGG) are compositionally biased toward polar residues. Low complexity predominate over residues 228 to 245 (TAAVAASSTATTTSDLAT). The RING-type zinc-finger motif lies at 263–302 (CHLCQGYLINATTIVECLHSFCHSCLINHLRKERFCPRCE). Disordered regions lie at residues 561–693 (KREK…FSED), 711–856 (VESP…NRTP), 895–960 (IGGG…SNNY), 1011–1097 (YKYT…EKQQ), 1116–1315 (SITI…LAPK), 1330–1408 (NPAA…HPVM), and 1512–1601 (AATG…TKSK). Positions 567 to 590 (SPQMSSKSSSKSSPCTPVSSPSEP) are enriched in low complexity. Residues 611-637 (DPERREIVKPLKPEKESRSKKKDKDGS) are compositionally biased toward basic and acidic residues. Residues 638 to 649 (PKSSSSSSSSSS) show a composition bias toward low complexity. Residues Ser656 and Ser658 each carry the phosphoserine modification. The span at 676-689 (SGVSTLSPRVTSGA) shows a compositional bias: polar residues. The span at 729-739 (SVQQSASPKSK) shows a compositional bias: low complexity. Pro residues predominate over residues 812 to 822 (LMPPPAKPPML). Over residues 929–938 (TTPSQGNKNV) the composition is skewed to polar residues. Over residues 1011 to 1022 (YKYTPKPTPNSG) the composition is skewed to low complexity. Over residues 1036–1045 (LGGGNGGSLG) the composition is skewed to gly residues. The span at 1069-1085 (SSATQSGGNNGIVNNNI) shows a compositional bias: low complexity. The segment covering 1116–1133 (SITISRDNGDSSSPNNGQ) has biased composition (polar residues). Ser1139 is subject to Phosphoserine. Residues 1204-1217 (PQLPKVATPPPPSS) are compositionally biased toward pro residues. Phosphothreonine occurs at positions 1222, 1236, and 1251. Basic and acidic residues predominate over residues 1247-1258 (VDKKTPSPEKRT). 3 positions are modified to phosphoserine: Ser1253, Ser1266, and Ser1274. Polar residues predominate over residues 1261-1272 (QMGSHSPTASEN). Composition is skewed to polar residues over residues 1352-1375 (QSGQ…SPPA) and 1561-1587 (APQT…NNGA).

As to quaternary structure, component of PRC1 complex, which contains many PcG proteins like Pc, ph, Scm, Psc, Sce and also chromatin-remodeling proteins such as histone deacetylases. This complex is distinct from the Esc/E(z) complex, at least composed of esc, E(z), Su(z)12, HDAC1/Rpd3 and Caf1-55. The 2 complexes however cooperate and interact together during the first 3 hours of development to establish PcG silencing.

Its subcellular location is the nucleus. Its function is as follows. Polycomb group (PcG) protein. PcG proteins act by forming multiprotein complexes, which are required to maintain the transcriptionally repressive state of homeotic genes throughout development. PcG proteins are not required to initiate repression, but to maintain it during later stages of development. Component of the PcG multiprotein PRC1 complex, a complex that acts via chromatin remodeling and modification of histones; it mediates monoubiquitination of histone H2A 'Lys-118', rendering chromatin heritably changed in its expressibility. Needed to maintain expression patterns of the homeotic selector genes of the Antennapedia (Antp-C) and Bithorax (BX-C) complexes, and hence for the maintenance of segmental determination. This Drosophila melanogaster (Fruit fly) protein is Polycomb group protein Psc (Psc).